Here is a 330-residue protein sequence, read N- to C-terminus: tRNA U34 carboxymethyltransferase (330 aa).

Carboxy-S-adenosyl-L-methionine is bound by residues Lys-98, Trp-112, Lys-117, Gly-137, 187–188 (ME), Met-203, Tyr-207, and Arg-322. The segment at 309 to 330 (NPSKTIEGYPGPKRATLIAEKP) is disordered.

Belongs to the class I-like SAM-binding methyltransferase superfamily. CmoB family. In terms of assembly, homotetramer.

The enzyme catalyses carboxy-S-adenosyl-L-methionine + 5-hydroxyuridine(34) in tRNA = 5-carboxymethoxyuridine(34) in tRNA + S-adenosyl-L-homocysteine + H(+). Its function is as follows. Catalyzes carboxymethyl transfer from carboxy-S-adenosyl-L-methionine (Cx-SAM) to 5-hydroxyuridine (ho5U) to form 5-carboxymethoxyuridine (cmo5U) at position 34 in tRNAs. This chain is tRNA U34 carboxymethyltransferase, found in Marinobacter nauticus (strain ATCC 700491 / DSM 11845 / VT8) (Marinobacter aquaeolei).